A 477-amino-acid chain; its full sequence is Aspartyl/glutamyl-tRNA(Asn/Gln) amidotransferase subunit B (477 aa).

Belongs to the GatB/GatE family. GatB subfamily. Heterotrimer of A, B and C subunits.

The enzyme catalyses L-glutamyl-tRNA(Gln) + L-glutamine + ATP + H2O = L-glutaminyl-tRNA(Gln) + L-glutamate + ADP + phosphate + H(+). The catalysed reaction is L-aspartyl-tRNA(Asn) + L-glutamine + ATP + H2O = L-asparaginyl-tRNA(Asn) + L-glutamate + ADP + phosphate + 2 H(+). In terms of biological role, allows the formation of correctly charged Asn-tRNA(Asn) or Gln-tRNA(Gln) through the transamidation of misacylated Asp-tRNA(Asn) or Glu-tRNA(Gln) in organisms which lack either or both of asparaginyl-tRNA or glutaminyl-tRNA synthetases. The reaction takes place in the presence of glutamine and ATP through an activated phospho-Asp-tRNA(Asn) or phospho-Glu-tRNA(Gln). The polypeptide is Aspartyl/glutamyl-tRNA(Asn/Gln) amidotransferase subunit B (Lactococcus lactis subsp. cremoris (strain MG1363)).